The sequence spans 102 residues: NADH-quinone oxidoreductase subunit K (102 aa).

3 helical membrane passes run 6-26, 30-50, and 62-82; these read LEHGLAVAGILFCLGLVGLMV, ILFVLMSLEVMMNASALAFVV, and VMFILVISLAAAEASIGLAIL.

Belongs to the complex I subunit 4L family. As to quaternary structure, NDH-1 is composed of 13 different subunits. Subunits NuoA, H, J, K, L, M, N constitute the membrane sector of the complex.

It localises to the cell inner membrane. It catalyses the reaction a quinone + NADH + 5 H(+)(in) = a quinol + NAD(+) + 4 H(+)(out). Functionally, NDH-1 shuttles electrons from NADH, via FMN and iron-sulfur (Fe-S) centers, to quinones in the respiratory chain. The immediate electron acceptor for the enzyme in this species is believed to be ubiquinone. Couples the redox reaction to proton translocation (for every two electrons transferred, four hydrogen ions are translocated across the cytoplasmic membrane), and thus conserves the redox energy in a proton gradient. The chain is NADH-quinone oxidoreductase subunit K from Pseudomonas putida (strain ATCC 700007 / DSM 6899 / JCM 31910 / BCRC 17059 / LMG 24140 / F1).